Reading from the N-terminus, the 199-residue chain is Superoxide dismutase [Mn] (199 aa).

Positions 27, 76, 160, and 164 each coordinate Mn(2+).

Belongs to the iron/manganese superoxide dismutase family. Requires Mn(2+) as cofactor.

It carries out the reaction 2 superoxide + 2 H(+) = H2O2 + O2. Functionally, destroys superoxide anion radicals which are normally produced within the cells and which are toxic to biological systems. This Corynebacterium diphtheriae (strain ATCC 700971 / NCTC 13129 / Biotype gravis) protein is Superoxide dismutase [Mn] (sodA).